The sequence spans 583 residues: cAMP-dependent protein kinase catalytic subunit 3 (583 aa).

Disordered regions lie at residues 51-75 and 98-264; these read ATPT…TIGK and SGTA…QTAK. Polar residues-rich tracts occupy residues 52-69 and 98-107; these read TPTQ…TGTP and SGTAGSTSKL. The span at 108 to 162 shows a compositional bias: low complexity; that stretch reads TTGNGSGNTMTSAYKIPSNNSTTANDSSNTETTFTFKLGRSNGRSSSNVASSESS. Acidic residues predominate over residues 163 to 176; the sequence is DPLESDYSEEDPEQ. Over residues 181–200 the composition is skewed to low complexity; sequence PDPATNSRSSSTATTTTTSS. Over residues 205 to 219 the composition is skewed to acidic residues; sequence NDVDEEDEEDDENEG. Positions 221–234 are enriched in basic and acidic residues; it reads GNGRDADDATHDSS. The segment covering 235-256 has biased composition (acidic residues); sequence ESIEEDDGNETDDEEDDDESEE. Residues 274 to 528 form the Protein kinase domain; it reads YQIIKTVGTG…ADDVKRHRWF (255 aa). ATP contacts are provided by residues 280–288 and Lys-303; that span reads VGTGTFGRV. Asp-397 acts as the Proton acceptor in catalysis. Positions 529-583 constitute an AGC-kinase C-terminal domain; it reads KHLNWNDVYSKKLKPPILPDVHHDGDTKNFDDYPEKDWKPAKAVDQRDLQYFNDF.

It belongs to the protein kinase superfamily. AGC Ser/Thr protein kinase family. cAMP subfamily. Expressed in embryonic mesoderm, and the optic lamina, wing disk and leg disks of third instar larvae. More abundant in adult head than adult body.

The enzyme catalyses L-seryl-[protein] + ATP = O-phospho-L-seryl-[protein] + ADP + H(+). It catalyses the reaction L-threonyl-[protein] + ATP = O-phospho-L-threonyl-[protein] + ADP + H(+). Functionally, does not have an essential role in development. The chain is cAMP-dependent protein kinase catalytic subunit 3 (Pka-C3) from Drosophila melanogaster (Fruit fly).